The sequence spans 633 residues: Extracellular metalloproteinase 3 (633 aa).

An N-terminal signal peptide occupies residues 1–18; it reads MHGLLLAGLLALPMNVLA. The propeptide occupies 19–246; it reads HPAEQHASNV…VHNVVDYVAS (228 aa). The N-linked (GlcNAc...) asparagine glycan is linked to N410. A Zn(2+)-binding site is contributed by H429. E430 is an active-site residue. H433 contacts Zn(2+). N480 and N622 each carry an N-linked (GlcNAc...) asparagine glycan.

Belongs to the peptidase M36 family. The cofactor is Zn(2+).

The protein resides in the secreted. Secreted metalloproteinase probably acting as a virulence factor. The polypeptide is Extracellular metalloproteinase 3 (MEP3) (Arthroderma benhamiae (Trichophyton mentagrophytes)).